The sequence spans 135 residues: uncharacterized protein (135 aa).

Helical transmembrane passes span I4 to G24, W26 to I46, L68 to W88, and L93 to L113.

Belongs to the bacteriophage holin family. Cp-1 holin subfamily.

It is found in the cell membrane. This is an uncharacterized protein from Clostridium perfringens (strain 13 / Type A).